Consider the following 518-residue polypeptide: Putative succinate-semialdehyde dehydrogenase [NADP(+)] 2 (518 aa).

NADP(+) contacts are provided by residues 157-158, 181-184, and 232-233; these read WN, KPDS, and GS. Residue Glu254 is the Proton acceptor of the active site. Leu255 is a binding site for NADP(+). The active-site Nucleophile is Cys288. Position 386 (Glu386) interacts with NADP(+).

It belongs to the aldehyde dehydrogenase family.

The enzyme catalyses succinate semialdehyde + NADP(+) + H2O = succinate + NADPH + 2 H(+). Catalyzes the NADP(+)-dependent oxidation of succinate semialdehyde to succinate. Although it has succinate semialdehyde dehydrogenase activity, is likely to act physiologically on a different aldehyde(s). This chain is Putative succinate-semialdehyde dehydrogenase [NADP(+)] 2 (gabD2), found in Mycobacterium ulcerans (strain Agy99).